The chain runs to 419 residues: GTPase Obg (419 aa).

One can recognise an Obg domain in the interval 1-158 (MHFVDEAFNE…FKIKTELKVL (158 aa)). One can recognise an OBG-type G domain in the interval 159–324 (ADIGLLGFPS…LKYKMSSFLQ (166 aa)). GTP is bound by residues 165 to 172 (GFPSVGKS), 190 to 194 (FTTIK), 211 to 214 (DLPG), 278 to 281 (NKMD), and 305 to 307 (SLV). Mg(2+) is bound by residues S172 and T192. The 78-residue stretch at 342-419 (TLTDNLKTIS…KICDRLFDFL (78 aa)) folds into the OCT domain.

The protein belongs to the TRAFAC class OBG-HflX-like GTPase superfamily. OBG GTPase family. Monomer. Requires Mg(2+) as cofactor.

The protein resides in the cytoplasm. An essential GTPase which binds GTP, GDP and possibly (p)ppGpp with moderate affinity, with high nucleotide exchange rates and a fairly low GTP hydrolysis rate. Plays a role in control of the cell cycle, stress response, ribosome biogenesis and in those bacteria that undergo differentiation, in morphogenesis control. This Aster yellows witches'-broom phytoplasma (strain AYWB) protein is GTPase Obg.